The sequence spans 365 residues: MSVKKAGVLGATGSVGQRFILLLSKHPEFEIHALGASSRSAGKKYKDAASWKQTETLPETEQDIVVQECKPEGNFLECDVVFSGLDADVAGDIEKSFVEAGLAVVSNAKNYRREKDVPLVVPIVNPEHIDVVENKVKQAVSKGGKKPGFIICISNCSTAGLVAPLKPLVEKFGPIDALTTTTLQAISGAGFSPGVSGMDILDNIVPYISGEEDKLEWETKKILGGVNAEGTEFVPIPESEMKVSAQCNRVPVIDGHTECISLRFANRPAPSVEDVKQCLREYECAASKLGCHSAPKQTIHVLDQPDRPQPRLDRDRDSGYGVSVGRIREDSLLDFKMVVLSHNTIIGAAGAGILIAEILKAKNII.

NADP(+) is bound by residues Thr-12, Gly-13, Ser-14, Val-15, Ser-37, Ser-40, Leu-85, and Asp-86. Cys-156 serves as the catalytic Acyl-thioester intermediate. Gly-188 is an NADP(+) binding site. Residue His-256 is the Proton acceptor of the active site. Asn-343 is a binding site for NADP(+).

Belongs to the aspartate-semialdehyde dehydrogenase family. Homotetramer; dimer of dimers.

It localises to the cytoplasm. The protein localises to the cytosol. The protein resides in the nucleus. The catalysed reaction is L-aspartate 4-semialdehyde + phosphate + NADP(+) = 4-phospho-L-aspartate + NADPH + H(+). The protein operates within amino-acid biosynthesis; L-methionine biosynthesis via de novo pathway; L-homoserine from L-aspartate: step 2/3. It participates in amino-acid biosynthesis; L-threonine biosynthesis; L-threonine from L-aspartate: step 2/5. Its activity is regulated as follows. Inhibited by the non-competitive inhibitors phthalaldehyde and naphthalene, the competitive inhibitor 1,4-benzoquinone and derivates such as 2-chloro-3-methoxy-1,4-naphthoquinone, 2,3-dichloro-1,4-naphthoquinone, 2-chloro-1,4-naphthoquinone, 2-bromo-1,4-naphthoquinone and 2,3-dichloro-5,8-dihydroxy-1,4-naphthoquinone, and 5-aminoisoquinoline. Inhibited by vinyl sulfones. Its function is as follows. Catalyzes the NADPH-dependent formation of L-aspartate 4-semialdehyde (L-ASA) by the reductive dephosphorylation of 4-phospho-L-aspartate. Mediates the second step in the biosynthesis of amino acids that derive from aspartate (the aspartate family of amino acids), including methioinine and threonine, the latter of which is a precursor to isoleucine. In Candida albicans (strain SC5314 / ATCC MYA-2876) (Yeast), this protein is Aspartate-semialdehyde dehydrogenase.